The sequence spans 284 residues: Phosphate import ATP-binding protein PstB 2 (284 aa).

The span at 1-22 shows a compositional bias: polar residues; the sequence is MTLLSTLRGISSPARQQPGTQS. Residues 1–29 form a disordered region; that stretch reads MTLLSTLRGISSPARQQPGTQSESRRGGD. The ABC transporter domain occupies 36–278; that stretch reads LAVAGVSHGF…PDDARARKFI (243 aa). 68–75 contacts ATP; it reads GPSGTGKT.

It belongs to the ABC transporter superfamily. Phosphate importer (TC 3.A.1.7) family. In terms of assembly, the complex is composed of two ATP-binding proteins (PstB), two transmembrane proteins (PstC and PstA) and a solute-binding protein (PstS).

Its subcellular location is the cell membrane. It carries out the reaction phosphate(out) + ATP + H2O = ADP + 2 phosphate(in) + H(+). Functionally, part of the ABC transporter complex PstSACB involved in phosphate import. Responsible for energy coupling to the transport system. The polypeptide is Phosphate import ATP-binding protein PstB 2 (Natronomonas pharaonis (strain ATCC 35678 / DSM 2160 / CIP 103997 / JCM 8858 / NBRC 14720 / NCIMB 2260 / Gabara) (Halobacterium pharaonis)).